The following is a 214-amino-acid chain: Probable nicotinate-nucleotide adenylyltransferase (214 aa).

It belongs to the NadD family.

The enzyme catalyses nicotinate beta-D-ribonucleotide + ATP + H(+) = deamido-NAD(+) + diphosphate. Its pathway is cofactor biosynthesis; NAD(+) biosynthesis; deamido-NAD(+) from nicotinate D-ribonucleotide: step 1/1. Functionally, catalyzes the reversible adenylation of nicotinate mononucleotide (NaMN) to nicotinic acid adenine dinucleotide (NaAD). This Pseudomonas fluorescens (strain ATCC BAA-477 / NRRL B-23932 / Pf-5) protein is Probable nicotinate-nucleotide adenylyltransferase.